We begin with the raw amino-acid sequence, 270 residues long: Tryptophan synthase alpha chain (270 aa).

Catalysis depends on proton acceptor residues Glu-49 and Asp-60.

This sequence belongs to the TrpA family. As to quaternary structure, tetramer of two alpha and two beta chains.

The enzyme catalyses (1S,2R)-1-C-(indol-3-yl)glycerol 3-phosphate + L-serine = D-glyceraldehyde 3-phosphate + L-tryptophan + H2O. It functions in the pathway amino-acid biosynthesis; L-tryptophan biosynthesis; L-tryptophan from chorismate: step 5/5. Functionally, the alpha subunit is responsible for the aldol cleavage of indoleglycerol phosphate to indole and glyceraldehyde 3-phosphate. The polypeptide is Tryptophan synthase alpha chain (Paraburkholderia phytofirmans (strain DSM 17436 / LMG 22146 / PsJN) (Burkholderia phytofirmans)).